The primary structure comprises 25 residues: uncharacterized protein (25 aa).

This is an uncharacterized protein from Archaeoglobus fulgidus (strain ATCC 49558 / DSM 4304 / JCM 9628 / NBRC 100126 / VC-16).